Consider the following 258-residue polypeptide: Development-specific 25 kDa protein (258 aa).

10-34 (VYVGGFSGFGYQVCQMMMKKPMKHL) contributes to the NAD(+) binding site. Ser138 contributes to the substrate binding site. Tyr151 functions as the Proton acceptor in the catalytic mechanism.

Belongs to the short-chain dehydrogenases/reductases (SDR) family.

This chain is Development-specific 25 kDa protein, found in Sarcophaga peregrina (Flesh fly).